The following is a 42-amino-acid chain: Photosystem II reaction center protein J (42 aa).

The chain crosses the membrane as a helical span at residues 10–30 (IPLWLVGTVAGTAALTLVAVF).

The protein belongs to the PsbJ family. In terms of assembly, PSII is composed of 1 copy each of membrane proteins PsbA, PsbB, PsbC, PsbD, PsbE, PsbF, PsbH, PsbI, PsbJ, PsbK, PsbL, PsbM, PsbT, PsbX, PsbY, PsbZ, Psb30/Ycf12, at least 3 peripheral proteins of the oxygen-evolving complex and a large number of cofactors. It forms dimeric complexes.

The protein localises to the plastid. It localises to the chloroplast thylakoid membrane. Functionally, one of the components of the core complex of photosystem II (PSII). PSII is a light-driven water:plastoquinone oxidoreductase that uses light energy to abstract electrons from H(2)O, generating O(2) and a proton gradient subsequently used for ATP formation. It consists of a core antenna complex that captures photons, and an electron transfer chain that converts photonic excitation into a charge separation. The protein is Photosystem II reaction center protein J of Chlorella vulgaris (Green alga).